We begin with the raw amino-acid sequence, 950 residues long: Valine--tRNA ligase, mitochondrial (950 aa).

The N-terminal 90 residues, 1-90, are a transit peptide targeting the mitochondrion; the sequence is MFHFQRSFSS…ITIQDALARF (90 aa). The 'HIGH' region motif lies at 67 to 77; it reads PNITGKLHIGH. The 'KMSKS' region motif lies at 556-560; it reads KMSKS. Lys-559 contacts ATP.

The protein belongs to the class-I aminoacyl-tRNA synthetase family.

The protein localises to the mitochondrion. The catalysed reaction is tRNA(Val) + L-valine + ATP = L-valyl-tRNA(Val) + AMP + diphosphate. This Schizosaccharomyces pombe (strain 972 / ATCC 24843) (Fission yeast) protein is Valine--tRNA ligase, mitochondrial (vas1).